Consider the following 493-residue polypeptide: Glutamyl-tRNA(Gln) amidotransferase subunit A (493 aa).

Residues Lys78 and Ser158 each act as charge relay system in the active site. Residue Ser182 is the Acyl-ester intermediate of the active site.

This sequence belongs to the amidase family. GatA subfamily. As to quaternary structure, heterotrimer of A, B and C subunits.

The catalysed reaction is L-glutamyl-tRNA(Gln) + L-glutamine + ATP + H2O = L-glutaminyl-tRNA(Gln) + L-glutamate + ADP + phosphate + H(+). Functionally, allows the formation of correctly charged Gln-tRNA(Gln) through the transamidation of misacylated Glu-tRNA(Gln) in organisms which lack glutaminyl-tRNA synthetase. The reaction takes place in the presence of glutamine and ATP through an activated gamma-phospho-Glu-tRNA(Gln). This Methylorubrum populi (strain ATCC BAA-705 / NCIMB 13946 / BJ001) (Methylobacterium populi) protein is Glutamyl-tRNA(Gln) amidotransferase subunit A.